A 142-amino-acid chain; its full sequence is MATFKLIVVSAEQHIFNGEVKGIQATGSEGELGILAGHLPLLTAIKPGIIKITLEDDTEEVIYISGGFLEVQPTIVTVLADVAIRGKELDRERILEAKRKAEQNIVSGAKDASYEMLVSKLSRELAKLRAYELTDRLTQRKR.

The protein belongs to the ATPase epsilon chain family. In terms of assembly, F-type ATPases have 2 components, CF(1) - the catalytic core - and CF(0) - the membrane proton channel. CF(1) has five subunits: alpha(3), beta(3), gamma(1), delta(1), epsilon(1). CF(0) has three main subunits: a, b and c.

It is found in the cell inner membrane. Produces ATP from ADP in the presence of a proton gradient across the membrane. This chain is ATP synthase epsilon chain, found in Histophilus somni (strain 2336) (Haemophilus somnus).